Here is a 347-residue protein sequence, read N- to C-terminus: Protein RecA (347 aa).

64 to 71 (GPESSGKT) lines the ATP pocket.

This sequence belongs to the RecA family.

It is found in the cytoplasm. Its function is as follows. Can catalyze the hydrolysis of ATP in the presence of single-stranded DNA, the ATP-dependent uptake of single-stranded DNA by duplex DNA, and the ATP-dependent hybridization of homologous single-stranded DNAs. It interacts with LexA causing its activation and leading to its autocatalytic cleavage. This Bartonella bacilliformis (strain ATCC 35685 / KC583 / Herrer 020/F12,63) protein is Protein RecA.